A 169-amino-acid chain; its full sequence is uncharacterized protein (169 aa).

Residues Leu18–Pro79 form the HTH asnC-type domain. The segment at residues Ser37–Lys56 is a DNA-binding region (H-T-H motif).

This is an uncharacterized protein from Sinorhizobium fredii (strain NBRC 101917 / NGR234).